We begin with the raw amino-acid sequence, 115 residues long: Vespryn (115 aa).

Positions 1–15 (MTWLLLCLLAQYENG) are cleaved as a signal peptide. A B30.2/SPRY domain is found at 22–115 (SSSAKPYKTS…VKRKDHLRLT (94 aa)).

It belongs to the ohanin/vespryn family. As to expression, expressed by the venom gland.

Its subcellular location is the secreted. Neurotoxin that produces dose-dependent hypolocomotion and hyperalgesia in mice. May directly act on the central nervous system, as it is 6500-fold more potent when administered intracerebroventricularly than intraperitoneal. The chain is Vespryn from Pogona barbata (Bearded dragon).